Consider the following 472-residue polypeptide: Glutamate--tRNA ligase (472 aa).

The short motif at 10 to 20 (PSPTGYLHVGG) is the 'HIGH' region element. Zn(2+)-binding residues include Cys99, Cys101, Cys126, and His128. The short motif at 238–242 (KLSKR) is the 'KMSKS' region element. Lys241 is a binding site for ATP.

Belongs to the class-I aminoacyl-tRNA synthetase family. Glutamate--tRNA ligase type 1 subfamily. As to quaternary structure, monomer. Requires Zn(2+) as cofactor.

The protein resides in the cytoplasm. The enzyme catalyses tRNA(Glu) + L-glutamate + ATP = L-glutamyl-tRNA(Glu) + AMP + diphosphate. Catalyzes the attachment of glutamate to tRNA(Glu) in a two-step reaction: glutamate is first activated by ATP to form Glu-AMP and then transferred to the acceptor end of tRNA(Glu). The protein is Glutamate--tRNA ligase of Proteus mirabilis (strain HI4320).